The primary structure comprises 57 residues: LICHRVHGLQTCEPDQKFCFRKTTMFFPNHPVLLMGCTSSCPTEKYSVCCSTDKCNK.

4 cysteine pairs are disulfide-bonded: Cys-3-Cys-19, Cys-12-Cys-37, Cys-41-Cys-49, and Cys-50-Cys-55.

It belongs to the three-finger toxin family. Short-chain subfamily. In terms of tissue distribution, expressed by the venom gland.

The protein resides in the secreted. This toxin binds and inhibits rat muscle adult alpha-1-beta-1-delta-epsilon/CHRNA1-CHRNB1-CHRND-CHRNE (IC(50)=3.1 uM) and fetal alpha-1-beta-1-gamma-delta/CHRNA1-CHRNB1-CHRNG-CHRND (IC(50)=5.6 uM) nicotinic acetylcholine receptors (nAChR). Shows a very low inhibition on rat neuronal alpha-3-beta-2/CHRNA3-CHRNB2 nAChR (IC(50)=50.2 uM) nAChR. Binds to the acetylcholine-binding pocket and acts as a competitive antagonist. Does not inhibit human glycine receptor (homopentamer composed of alpha-1 subunits, GLRA1), but seems to potentiate it (about 2-fold increased activity). This is Neurotoxin Oh9-1 from Ophiophagus hannah (King cobra).